A 594-amino-acid polypeptide reads, in one-letter code: Golgi-associated RAB2 interactor protein 4 (594 aa).

The disordered stretch occupies residues methionine 387 to glycine 524. Positions serine 396–glycine 406 are enriched in polar residues. Composition is skewed to basic and acidic residues over residues histidine 408 to leucine 433, threonine 442 to alanine 455, and alanine 468 to glycine 477. Polar residues predominate over residues serine 511–serine 520.

This sequence belongs to the GARIN family. As to quaternary structure, interacts (via N-terminus) with RAB2B (in GTP-bound form).

The protein localises to the golgi apparatus. RAB2B effector protein required for the compacted Golgi morphology, probably through interaction with small GTPase RAB2B. This chain is Golgi-associated RAB2 interactor protein 4, found in Homo sapiens (Human).